We begin with the raw amino-acid sequence, 617 residues long: Electron transfer flavoprotein-ubiquinone oxidoreductase, mitochondrial (617 aa).

A mitochondrion-targeting transit peptide spans 1–33 (MLVPLAKLSCPAYQCFHALKIKKNYLPLCATRW). Residue 71–85 (VVIVGAGPAGLSAAV) coordinates FAD. Residue Lys96 is modified to N6-acetyllysine. An intramembrane segment occupies 109–130 (IGAHTLSGACLDPGAFKELFPD). Lys132 and Lys223 each carry N6-acetyllysine. 2 residues coordinate a ubiquinone: Gly305 and Gly306. Lys357 is modified (N6-acetyllysine). Residues 428–447 (MGLHVTEYEDNLKNSWVWKE) lie within the membrane without spanning it. Phosphoserine is present on Ser551. Positions 561, 586, 589, and 592 each coordinate [4Fe-4S] cluster. Positions 577 to 606 (FRLQINAQNCVHCKTCDIKDPSQNINWVVP) constitute a 4Fe-4S ferredoxin-type domain.

This sequence belongs to the ETF-QO/FixC family. In terms of assembly, monomer. Requires [4Fe-4S] cluster as cofactor. FAD is required as a cofactor.

It localises to the mitochondrion inner membrane. The catalysed reaction is a ubiquinone + reduced [electron-transfer flavoprotein] = a ubiquinol + oxidized [electron-transfer flavoprotein] + H(+). Accepts electrons from ETF and reduces ubiquinone. The chain is Electron transfer flavoprotein-ubiquinone oxidoreductase, mitochondrial (ETFDH) from Pongo abelii (Sumatran orangutan).